The sequence spans 273 residues: MSNAEIRIAIVGAAGRMGRQLIQAVVLAEGARLGAALVRSGSSLVGTDAGELAGCGALGITLTDDLEAVANDFDVLIDFTRPEGTLHYLAFCRQHHKAMVIGTTGFDDAGKAAIEAAAQDIAIVFAANFSVGVNVVLKLVEKAAKVMGEYADIEIIEAHHRHKVDAPSGTALAMGEAIADAMSWDLKQHAVYAREGFTGEREAQTIGFATVRAGDIVGEHTAMFADIGERVEISHKASSRMTFAKGAVRAAIWLDGRKKGLYDMRCVLNLHDL.

12 to 17 (GAAGRM) is a binding site for NAD(+). Arg39 serves as a coordination point for NADP(+). Residues 102 to 104 (GTT) and 126 to 129 (AANF) each bind NAD(+). His159 acts as the Proton donor/acceptor in catalysis. His160 is a (S)-2,3,4,5-tetrahydrodipicolinate binding site. Lys163 functions as the Proton donor in the catalytic mechanism. 169–170 (GT) serves as a coordination point for (S)-2,3,4,5-tetrahydrodipicolinate.

This sequence belongs to the DapB family. Homotetramer.

The protein localises to the cytoplasm. The enzyme catalyses (S)-2,3,4,5-tetrahydrodipicolinate + NAD(+) + H2O = (2S,4S)-4-hydroxy-2,3,4,5-tetrahydrodipicolinate + NADH + H(+). The catalysed reaction is (S)-2,3,4,5-tetrahydrodipicolinate + NADP(+) + H2O = (2S,4S)-4-hydroxy-2,3,4,5-tetrahydrodipicolinate + NADPH + H(+). Its pathway is amino-acid biosynthesis; L-lysine biosynthesis via DAP pathway; (S)-tetrahydrodipicolinate from L-aspartate: step 4/4. Functionally, catalyzes the conversion of 4-hydroxy-tetrahydrodipicolinate (HTPA) to tetrahydrodipicolinate. This Erwinia tasmaniensis (strain DSM 17950 / CFBP 7177 / CIP 109463 / NCPPB 4357 / Et1/99) protein is 4-hydroxy-tetrahydrodipicolinate reductase.